The sequence spans 614 residues: Sodium- and chloride-dependent betaine transporter (614 aa).

At 1 to 44 (MDGKVAVQECGPPAVSWVPEEGEKLDQEDEDQVKDRGQWTNKME) the chain is on the cytoplasmic side. 3 consecutive transmembrane segments (helical) span residues 45–65 (FVLS…FPYL), 73–92 (AFFI…VFFL), and 117–137 (GIGL…IIIL). Over 138-210 (AWALFYLFSS…SGIHDLGSLR (73 aa)) the chain is Extracellular. A disulfide bridge connects residues C157 and C166. 2 N-linked (GlcNAc...) asparagine glycosylation sites follow: N171 and N183. Transmembrane regions (helical) follow at residues 211 to 229 (WELA…FCIW), 238 to 255 (VVYF…ILLI), 291 to 308 (IFFS…LGSY), 320 to 341 (IALC…FSIL), 374 to 393 (MPLS…FLGL), 423 to 441 (LLIL…FLVT), 458 to 478 (GICL…VYGA), 499 to 518 (ISWL…FSLS), and 538 to 556 (IGWF…FVVI). Over 557 to 614 (TLLKTRGPFRKRLRQLITPDSSLPQPKQHPCLDGSAGRNFGPSPTREGLIAGEKETHL) the chain is Cytoplasmic. The disordered stretch occupies residues 576-614 (DSSLPQPKQHPCLDGSAGRNFGPSPTREGLIAGEKETHL).

It belongs to the sodium:neurotransmitter symporter (SNF) (TC 2.A.22) family. SLC6A12 subfamily. In terms of assembly, interacts with LIN7C. Expressed in kidney, liver, heart, skeletal muscle, placenta, and a widespread distribution in the brain.

The protein localises to the basolateral cell membrane. Its subcellular location is the cell membrane. It carries out the reaction 4-aminobutanoate(out) + chloride(out) + 3 Na(+)(out) = 4-aminobutanoate(in) + chloride(in) + 3 Na(+)(in). The catalysed reaction is glycine betaine(out) + 2 chloride(out) + 3 Na(+)(out) = glycine betaine(in) + 2 chloride(in) + 3 Na(+)(in). Transporter that mediates cellular uptake of betaine and GABA in a sodium- and chloride-dependent process. May have a role in regulation of GABAergic transmission in the brain through the reuptake of GABA into presynaptic terminals, as well as in osmotic regulation. Probably also involved in renal and hepatic osmotic regulation. This chain is Sodium- and chloride-dependent betaine transporter, found in Homo sapiens (Human).